The primary structure comprises 197 residues: Secreted RxLR effector protein 48 (197 aa).

The signal sequence occupies residues 1–27 (MCCVSWNWVLACTFLLIFLSWWNCCND). The RxLR-dEER signature appears at 58 to 79 (RLLRVNLAANAEVLTHEIEEEK).

It belongs to the RxLR effector family.

The protein resides in the secreted. The protein localises to the host nucleus. It is found in the host cytoplasm. In terms of biological role, secreted effector that completely suppresses the host cell death induced by cell death-inducing proteins. The chain is Secreted RxLR effector protein 48 from Plasmopara viticola (Downy mildew of grapevine).